The chain runs to 130 residues: Chaperone protein SycT (130 aa).

As to quaternary structure, binds to YopT.

Functionally, functions as a specific chaperone for YopT. In Yersinia enterocolitica, this protein is Chaperone protein SycT (sycT).